We begin with the raw amino-acid sequence, 522 residues long: MWFIVYILLALPIMLFVFLSCEWPKRNDAEQIEWSSGVPFLGNAHQMGKTPAEILNTFFEFWHKYNKDNFRIWIGYYANILVSNPKHLEVIMNSTTLIEKLDIYDMLHPWLGEGLLTSKGSKWHKHRKMITPTFHFNILQDFHQVMNENSAKFIKRLKEVSAGDNIIDFQDETHYLTLDAICDTAMGVTINAIEKRDTVDVVKAFKDMCHIINMRAFRPLQRSDFLYRFSPEYATYAKTLKTLKDFTNDIIAKRIKVHRTAAAKTNQEGSEFSRKKMLPDTLLSATIDGRPLNQQEIYEEVSTFMFEGHDTTTSGVAFAGYILSRFPEEQRKLYEEQQAVMGNELNRDATFQEISAMKYLDLFIKEAQRVYPSVPFIGRYTDKDYNIHGTIMPKGTTLNLGIIVLGYDDRVFEEPHRFYPERFEKQKPGPFEYVPFSAGPRNCIGQKFALLELKTVISKLVRTFEVLPAVDELVSKDGNLNTYVGLPKEEKERKERMGYKYDPILSAVLTLKSENGLHLRLR.

Residues Glu307 and Cys443 each coordinate heme.

Belongs to the cytochrome P450 family. Heme is required as a cofactor.

It localises to the mitochondrion. Functionally, probably involved in steroid hormones biosynthesis. The sequence is that of Cytochrome P450 4e5, mitochondrial (Cyp4e5) from Drosophila mettleri (Fruit fly).